A 101-amino-acid chain; its full sequence is Large ribosomal subunit protein uL24 (101 aa).

It belongs to the universal ribosomal protein uL24 family. As to quaternary structure, part of the 50S ribosomal subunit.

One of two assembly initiator proteins, it binds directly to the 5'-end of the 23S rRNA, where it nucleates assembly of the 50S subunit. Its function is as follows. One of the proteins that surrounds the polypeptide exit tunnel on the outside of the subunit. The protein is Large ribosomal subunit protein uL24 of Streptococcus uberis (strain ATCC BAA-854 / 0140J).